The chain runs to 371 residues: Choline kinase B1 (371 aa).

It belongs to the choline/ethanolamine kinase family. Mg(2+) is required as a cofactor.

It catalyses the reaction choline + ATP = phosphocholine + ADP + H(+). The chain is Choline kinase B1 (ckb-1) from Caenorhabditis elegans.